The following is a 257-amino-acid chain: MLAVLSPAKRLAARPALDLPADLAPSEPRLQDQADALARVARDLTAADLRRLMHISEPLARLNVARFAEFHEARNAAVPAVALFDGDTYAGLEARTMDADALRWAQERICILSGLYGLLRPLDRIQPHRLEMGTRLATERGATLYDFWGDRIAEALNARAAETGARVLVNCASVEYFTAADRAALKLPVITPTFLEERNGERKVVSFWAKRARGAMARFIAENRLDDPEDLRAFRAGGYAYEPDLSTDERPVFLRAG.

Belongs to the UPF0246 family.

The protein is UPF0246 protein Rsph17029_0026 of Cereibacter sphaeroides (strain ATCC 17029 / ATH 2.4.9) (Rhodobacter sphaeroides).